A 306-amino-acid polypeptide reads, in one-letter code: Agmatinase (306 aa).

The Mn(2+) site is built by His126, Asp149, His151, Asp153, Asp230, and Asp232.

It belongs to the arginase family. Agmatinase subfamily. Requires Mn(2+) as cofactor.

The catalysed reaction is agmatine + H2O = urea + putrescine. The protein operates within amine and polyamine biosynthesis; putrescine biosynthesis via agmatine pathway; putrescine from agmatine: step 1/1. Its function is as follows. Catalyzes the formation of putrescine from agmatine. The chain is Agmatinase from Enterobacter sp. (strain 638).